A 375-amino-acid chain; its full sequence is 4,4'-diaponeurosporenoate glycosyltransferase (375 aa).

Transmembrane regions (helical) follow at residues 3–23 (WLSR…ALIF), 164–184 (FYEG…NVFS), 277–297 (IMAA…GLCL), and 330–350 (FSNL…KIFI).

The protein belongs to the glycosyltransferase 2 family. CrtQ subfamily.

It localises to the cell membrane. It functions in the pathway carotenoid biosynthesis; staphyloxanthin biosynthesis; staphyloxanthin from farnesyl diphosphate: step 4/5. Catalyzes the glycosylation of 4,4'-diaponeurosporenoate, i.e. the esterification of glucose at the C1'' position with the carboxyl group of 4,4'-diaponeurosporenic acid, to form glycosyl-4,4'-diaponeurosporenoate. This is a step in the biosynthesis of staphyloxanthin, an orange pigment present in most staphylococci strains. This Staphylococcus aureus (strain bovine RF122 / ET3-1) protein is 4,4'-diaponeurosporenoate glycosyltransferase (crtQ).